Reading from the N-terminus, the 750-residue chain is 3-isopropylmalate dehydratase (750 aa).

The [4Fe-4S] cluster site is built by Cys-353, Cys-413, and Cys-416. Residues 492-524 (KYDGSPEVFKSTQDTTPAVKPPQPASDSSSSGG) form a disordered region.

Belongs to the aconitase/IPM isomerase family. Monomer. It depends on [4Fe-4S] cluster as a cofactor.

It carries out the reaction (2R,3S)-3-isopropylmalate = (2S)-2-isopropylmalate. It functions in the pathway amino-acid biosynthesis; L-leucine biosynthesis; L-leucine from 3-methyl-2-oxobutanoate: step 2/4. Functionally, catalyzes the isomerization between 2-isopropylmalate and 3-isopropylmalate, via the formation of 2-isopropylmaleate. This is 3-isopropylmalate dehydratase (LEU1) from Rhizopus niveus.